A 183-amino-acid polypeptide reads, in one-letter code: Capsid protein (183 aa).

Residues 136-183 (NAPILSTLPETTVVRQRGRAPRRRTPSPRRRRSQSPRRRRSQSPASQC) are disordered. Residues 151 to 176 (QRGRAPRRRTPSPRRRRSQSPRRRRS) are compositionally biased toward basic residues. The stretch at 155 to 161 (APRRRTP) is one 1; half-length repeat. The interval 155 to 177 (APRRRTPSPRRRRSQSPRRRRSQ) is 3 X 8 AA repeats of S-P-R-R-R-[PR]-S-Q. A Bipartite nuclear localization signal motif is present at residues 158–175 (RRTPSPRRRRSQSPRRRR). A phosphoserine; by host mark is found at S162 and S170. 2 tandem repeats follow at residues 162–169 (SPRRRRSQ) and 170–177 (SPRRRRSQ). The tract at residues 177 to 183 (QSPASQC) is RNA binding.

Belongs to the orthohepadnavirus core antigen family. Homodimerizes, then multimerizes. Interacts with cytosol exposed regions of viral L glycoprotein present in the reticulum-to-Golgi compartment. Interacts with human FLNB. Phosphorylated form interacts with host importin alpha; this interaction depends on the exposure of the NLS, which itself depends upon genome maturation and/or phosphorylation of the capsid protein. Interacts with host NUP153. Phosphorylated by host SRPK1, SRPK2, and maybe protein kinase C or GAPDH. Phosphorylation is critical for pregenomic RNA packaging. Protein kinase C phosphorylation is stimulated by HBx protein and may play a role in transport of the viral genome to the nucleus at the late step during the viral replication cycle.

Its subcellular location is the virion. The protein resides in the host cytoplasm. Self assembles to form an icosahedral capsid. Most capsids appear to be large particles with an icosahedral symmetry of T=4 and consist of 240 copies of capsid protein, though a fraction forms smaller T=3 particles consisting of 180 capsid proteins. Entering capsids are transported along microtubules to the nucleus. Phosphorylation of the capsid is thought to induce exposure of nuclear localization signal in the C-terminal portion of the capsid protein that allows binding to the nuclear pore complex via the importin (karyopherin-) alpha and beta. Capsids are imported in intact form through the nuclear pore into the nuclear basket, where it probably binds NUP153. Only capsids that contain the mature viral genome can release the viral DNA and capsid protein into the nucleoplasm. Immature capsids get stuck in the basket. Capsids encapsulate the pre-genomic RNA and the P protein. Pre-genomic RNA is reverse-transcribed into DNA while the capsid is still in the cytoplasm. The capsid can then either be directed to the nucleus, providing more genomes for transcription, or bud through the endoplasmic reticulum to provide new virions. In Homo sapiens (Human), this protein is Capsid protein.